Consider the following 151-residue polypeptide: SsrA-binding protein (151 aa).

The protein belongs to the SmpB family.

The protein localises to the cytoplasm. In terms of biological role, required for rescue of stalled ribosomes mediated by trans-translation. Binds to transfer-messenger RNA (tmRNA), required for stable association of tmRNA with ribosomes. tmRNA and SmpB together mimic tRNA shape, replacing the anticodon stem-loop with SmpB. tmRNA is encoded by the ssrA gene; the 2 termini fold to resemble tRNA(Ala) and it encodes a 'tag peptide', a short internal open reading frame. During trans-translation Ala-aminoacylated tmRNA acts like a tRNA, entering the A-site of stalled ribosomes, displacing the stalled mRNA. The ribosome then switches to translate the ORF on the tmRNA; the nascent peptide is terminated with the 'tag peptide' encoded by the tmRNA and targeted for degradation. The ribosome is freed to recommence translation, which seems to be the essential function of trans-translation. This is SsrA-binding protein from Chlamydia pneumoniae (Chlamydophila pneumoniae).